The following is a 333-amino-acid chain: HTH-type transcriptional repressor PurR (333 aa).

The region spanning 2 to 56 is the HTH lacI-type domain; the sequence is ATIKDVAKMAGVSTTTVSHVINKTRFVAKETEQQVLQAIKNLNYSPSAVARSLKV. The H-T-H motif DNA-binding region spans 4-23; it reads IKDVAKMAGVSTTTVSHVIN. Residues 48-56 mediate DNA binding; the sequence is SAVARSLKV. 5 residues coordinate hypoxanthine: tyrosine 73, lysine 189, threonine 191, phenylalanine 220, and aspartate 274.

As to quaternary structure, homodimer.

It participates in purine metabolism; purine nucleotide biosynthesis [regulation]. Functionally, is the main repressor of the genes involved in the de novo synthesis of purine nucleotides, regulating purB, purC, purEK, purF, purHD, purL, purMN and guaBA expression. PurR is allosterically activated to bind its cognate DNA by binding the purine corepressors, hypoxanthine or guanine, thereby effecting transcription repression. This Histophilus somni (strain 129Pt) (Haemophilus somnus) protein is HTH-type transcriptional repressor PurR.